A 435-amino-acid polypeptide reads, in one-letter code: MSYRPGSYSVSSMRPVGSVRSSQVMTVQRSMPLASAASVYGGAGGRGSRISVGGSSSGFGSGLGSGAGGSYSSMSVSGSGLVGNEKETMIGLNDRLAAYLETVRNLEQANSKLEFQIREALEKKGPTTRDLSPFEKTLEDLRKKVYDMTMDNSRLVLQIDNSRLAADDFRVKFESEYSIRQSVESDIIGLRKVIDDTNMGRMNLESEIESLKEELIFIKQNHNQEVNDLRNQIAQSGVQVDVDAPKGQDLAQVLAEVRAQYESMAQKNRDELKAWHENKLTEVEVEVIQNTEALQGARTEVTELRRQMQSLEIELESQRSMKASLEDSLRDTEMRNNMEMERYNNMILQLEAELGQLRGNIQMQASEYEALLNIKMKLEAEIATYRRLLDGEDFRLQDALVDQSSTKSIKKVTVTQTLVDGKVVSESTNTKEIGK.

The tract at residues 2–84 is head; that stretch reads SYRPGSYSVS…SVSGSGLVGN (83 aa). Positions 85-120 are coil 1A; that stretch reads EKETMIGLNDRLAAYLETVRNLEQANSKLEFQIREA. Residues 85–396 form the IF rod domain; sequence EKETMIGLND…RLLDGEDFRL (312 aa). The interval 121-137 is linker 1; it reads LEKKGPTTRDLSPFEKT. The coil 1B stretch occupies residues 138-229; sequence LEDLRKKVYD…QNHNQEVNDL (92 aa). Residues 230–253 form a linker 12 region; that stretch reads RNQIAQSGVQVDVDAPKGQDLAQV. The coil 2 stretch occupies residues 254 to 391; it reads LAEVRAQYES…IATYRRLLDG (138 aa). Positions 392 to 435 are tail; sequence EDFRLQDALVDQSSTKSIKKVTVTQTLVDGKVVSESTNTKEIGK.

This sequence belongs to the intermediate filament family. Heterotetramer of two type I and two type II keratins. Keratin-18 associates with keratin-8. In terms of processing, phosphorylated. Post-translationally, proteolytically cleaved by caspases during epithelial cell apoptosis.

In terms of biological role, when phosphorylated, plays a role in filament reorganization. This Acipenser baerii (Siberian sturgeon) protein is Keratin, type I cytoskeletal 18.